The primary structure comprises 177 residues: Ureidoglycolate lyase (177 aa).

It belongs to the ureidoglycolate lyase family. As to quaternary structure, homodimer. The cofactor is Ni(2+).

It catalyses the reaction (S)-ureidoglycolate = urea + glyoxylate. It participates in nitrogen metabolism; (S)-allantoin degradation. In terms of biological role, catalyzes the catabolism of the allantoin degradation intermediate (S)-ureidoglycolate, generating urea and glyoxylate. Involved in the utilization of allantoin as nitrogen source. The sequence is that of Ureidoglycolate lyase from Burkholderia cepacia (Pseudomonas cepacia).